The chain runs to 189 residues: Translation initiation factor IF-3 (189 aa).

It belongs to the IF-3 family. Monomer.

The protein resides in the cytoplasm. In terms of biological role, IF-3 binds to the 30S ribosomal subunit and shifts the equilibrium between 70S ribosomes and their 50S and 30S subunits in favor of the free subunits, thus enhancing the availability of 30S subunits on which protein synthesis initiation begins. The sequence is that of Translation initiation factor IF-3 from Corynebacterium glutamicum (strain ATCC 13032 / DSM 20300 / JCM 1318 / BCRC 11384 / CCUG 27702 / LMG 3730 / NBRC 12168 / NCIMB 10025 / NRRL B-2784 / 534).